The primary structure comprises 505 residues: MTKAQESLTLEDVAVDFTWEEWQFLSPAQKDLYRDVMLENYSNLVSVGYQAGKPDALTKLEQGEPLWTLEDEIHSPAHPEIEKADDHLQQPLQNQKILKRTGQRYEHGRTLKSYLGLTNQSRRYNRKEPAEFNGDGAFLHDNHEQMPTEIEFPESRKPISTKSQFLKHQQTHNIEKAHECTDCGKAFLKKSQLTEHKRIHTGKKPHVCSLCGKAFYKKYRLTEHERAHRGEKPHGCSLCGKAFYKRYRLTEHERAHKGEKPYGCSECGKAFPRKSELTEHQRIHTGIKPHQCSECGRAFSRKSLLVVHQRTHTGEKPHTCSECGKGFIQKGNLNIHQRTHTGEKPYGCIDCGKAFSQKSCLVAHQRYHTGKTPFVCPECGQPCSQKSGLIRHQKIHSGEKPYKCSDCGKAFLTKTMLIVHHRTHTGERPYGCDECEKAYFYMSCLVKHKRIHSREKRGDSVKVENPSTASHSLSPSEHVQGKSPVNMVTVAMVAGQCEFAHILHS.

In terms of domain architecture, KRAB spans 8–79; that stretch reads LTLEDVAVDF…EDEIHSPAHP (72 aa). A Glycyl lysine isopeptide (Lys-Gly) (interchain with G-Cter in SUMO2) cross-link involves residue Lys112. C2H2-type zinc fingers lie at residues 178 to 200, 206 to 228, 234 to 256, 262 to 284, 290 to 312, 318 to 340, 346 to 368, 374 to 396, 402 to 424, and 430 to 452; these read HECT…KRIH, HVCS…ERAH, HGCS…ERAH, YGCS…QRIH, HQCS…QRTH, HTCS…QRTH, YGCI…QRYH, FVCP…QKIH, YKCS…HRTH, and YGCD…KRIH. Positions 455-481 are disordered; sequence EKRGDSVKVENPSTASHSLSPSEHVQG. Residues 465–477 are compositionally biased toward polar residues; sequence NPSTASHSLSPSE.

Belongs to the krueppel C2H2-type zinc-finger protein family. In terms of tissue distribution, highly expressed in heart, skeletal muscle, and brain. Lower expression in liver, lung, kidney, pancreas and placenta.

It is found in the nucleus. Functionally, transcriptional repressor. Regulator of transcriptional factor complexes and may suppress SRE and AP-1 transcription activities mediated by growth factor signaling pathways. The polypeptide is Zinc finger protein 649 (ZNF649) (Homo sapiens (Human)).